The sequence spans 298 residues: MTKQTEYKRKPEWLKIKLNTNENYTGLKKMMRSKNLHTVCEEAKCPNIHECWAVRKTATFMILGAVCTRACRFCAVKTGLPTELDLQEPERVADSVVQMGLKHVVITAVARDDLKDGGAAVFAETVRAVRRKNPFTSIEVLPSDMGGVEENLKMLMDAKPDILNHNIETVRRLSDRVRARAKYERSLEFLRRAKEMQPDIPTKSSIMVGLGETREDLIEAMDDLRANNVDILTLGQYLQPSKKHLPVLKYYPPAEFAELKEIALSKGFSHCEAGPLVRSSYHADEQVRSAKEKTAEAK.

[4Fe-4S] cluster is bound by residues cysteine 40, cysteine 45, cysteine 51, cysteine 67, cysteine 71, cysteine 74, and serine 280. Residues alanine 53–serine 269 form the Radical SAM core domain.

This sequence belongs to the radical SAM superfamily. Lipoyl synthase family. The cofactor is [4Fe-4S] cluster.

The protein localises to the cytoplasm. The enzyme catalyses [[Fe-S] cluster scaffold protein carrying a second [4Fe-4S](2+) cluster] + N(6)-octanoyl-L-lysyl-[protein] + 2 oxidized [2Fe-2S]-[ferredoxin] + 2 S-adenosyl-L-methionine + 4 H(+) = [[Fe-S] cluster scaffold protein] + N(6)-[(R)-dihydrolipoyl]-L-lysyl-[protein] + 4 Fe(3+) + 2 hydrogen sulfide + 2 5'-deoxyadenosine + 2 L-methionine + 2 reduced [2Fe-2S]-[ferredoxin]. It functions in the pathway protein modification; protein lipoylation via endogenous pathway; protein N(6)-(lipoyl)lysine from octanoyl-[acyl-carrier-protein]. In terms of biological role, catalyzes the radical-mediated insertion of two sulfur atoms into the C-6 and C-8 positions of the octanoyl moiety bound to the lipoyl domains of lipoate-dependent enzymes, thereby converting the octanoylated domains into lipoylated derivatives. In Bacillus cereus (strain B4264), this protein is Lipoyl synthase.